A 421-amino-acid polypeptide reads, in one-letter code: Gamma-glutamyl phosphate reductase (421 aa).

It belongs to the gamma-glutamyl phosphate reductase family.

It localises to the cytoplasm. The catalysed reaction is L-glutamate 5-semialdehyde + phosphate + NADP(+) = L-glutamyl 5-phosphate + NADPH + H(+). It functions in the pathway amino-acid biosynthesis; L-proline biosynthesis; L-glutamate 5-semialdehyde from L-glutamate: step 2/2. Its function is as follows. Catalyzes the NADPH-dependent reduction of L-glutamate 5-phosphate into L-glutamate 5-semialdehyde and phosphate. The product spontaneously undergoes cyclization to form 1-pyrroline-5-carboxylate. The protein is Gamma-glutamyl phosphate reductase of Brucella suis biovar 1 (strain 1330).